The chain runs to 235 residues: Probable transcriptional regulatory protein Ccur92_05350 (235 aa).

This sequence belongs to the TACO1 family.

The protein localises to the cytoplasm. This Campylobacter curvus (strain 525.92) protein is Probable transcriptional regulatory protein Ccur92_05350.